The primary structure comprises 347 residues: MNPIILIIILMTVMLGTIIVMISTHWLLIWIGFEMNMLAIIPIMMKKHNPRATEASTKYFLTQSTASMLLMMAIIINLMFSGQWTVMKLFNPMASMLMTMALAMKLGMAPFHFWVPEVTQGIPLSSGLILLTWQKLAPMSVLYQILPSINLDLILTLSILSITIGGWGGLNQTQLRKIMAYSSIAHMGWMTAVLLYNPTMTLLNLIIYIIMTSTMFTLFMANSTTTTLSLSHTWNKAPIMTILVLITLLSMGGLPPLSGFMPKWMIIQEMTKNDSIILPTLMAITALLNLYFYMRLTYSTALTMFPSTNNMKMKWQFPTTKRMTLLPTMTVLSTMLLPLTPILSILE.

11 helical membrane-spanning segments follow: residues 3–23, 25–45, 67–87, 96–116, 122–142, 145–165, 178–198, 200–220, 237–257, 274–294, and 325–345; these read PIIL…VMIS, HWLL…PIMM, SMLL…WTVM, MLMT…FWVP, IPLS…MSVL, ILPS…ITIG, IMAY…LYNP, MTLL…TLFM, APIM…LPPL, DSII…YFYM, and LLPT…ILSI.

The protein belongs to the complex I subunit 2 family. Core subunit of respiratory chain NADH dehydrogenase (Complex I) which is composed of 45 different subunits. Interacts with TMEM242.

It is found in the mitochondrion inner membrane. The catalysed reaction is a ubiquinone + NADH + 5 H(+)(in) = a ubiquinol + NAD(+) + 4 H(+)(out). Core subunit of the mitochondrial membrane respiratory chain NADH dehydrogenase (Complex I) which catalyzes electron transfer from NADH through the respiratory chain, using ubiquinone as an electron acceptor. Essential for the catalytic activity and assembly of complex I. This chain is NADH-ubiquinone oxidoreductase chain 2, found in Ovis aries (Sheep).